A 318-amino-acid polypeptide reads, in one-letter code: Taste receptor type 2 member 60 (318 aa).

At 1–7 the chain is on the extracellular side; that stretch reads MNGDHMV. Residues 8 to 28 form a helical membrane-spanning segment; the sequence is LGSSVTDKKAIILVTILLLLR. Residues 29-40 lie on the Cytoplasmic side of the membrane; that stretch reads LVAIAGNGFIIA. Residues 41-61 form a helical membrane-spanning segment; it reads ALGVEWVLRRMLLPCDXLLVS. Topologically, residues 62–88 are extracellular; it reads LGASRFCLQSVVMGKTIYVFLHPMAFP. The chain crosses the membrane as a helical span at residues 89–109; the sequence is YNPVLQFLAFQWDFLNAATLW. The Cytoplasmic segment spans residues 110-128; that stretch reads FSTWLSVFYCVKIAAFTHP. The chain crosses the membrane as a helical span at residues 129-149; that stretch reads VFLWLKHKLSGWLPWILFSSV. Topologically, residues 150–183 are extracellular; sequence GLSSFTTILFFIGNHRMYQNYLRNHLQPWNITGN. An N-linked (GlcNAc...) asparagine glycan is attached at N179. A helical transmembrane segment spans residues 184–204; sequence SIRSYCEKFYLFPLKMITWTM. Topologically, residues 205–234 are cytoplasmic; it reads PTAVFFICMILLITSLGRHMKKALLTTSGF. The chain crosses the membrane as a helical span at residues 235–255; it reads REPSMQAHIKALLALLSFAML. The Extracellular segment spans residues 256 to 264; it reads FISYFLSLV. Residues 265–285 traverse the membrane as a helical segment; the sequence is FSAAGIFPPLDFKFWVWESVI. Topologically, residues 286-318 are cytoplasmic; it reads YLCAAVHPIILLFSNCRLRAVLKSCRSSRCGTP.

This sequence belongs to the G-protein coupled receptor T2R family.

The protein resides in the membrane. In terms of biological role, receptor that may play a role in the perception of bitterness and is gustducin-linked. May play a role in sensing the chemical composition of the gastrointestinal content. The activity of this receptor may stimulate alpha gustducin, mediate PLC-beta-2 activation and lead to the gating of TRPM5. The sequence is that of Taste receptor type 2 member 60 (TAS2R60) from Gorilla gorilla gorilla (Western lowland gorilla).